Here is a 138-residue protein sequence, read N- to C-terminus: Acyl carrier protein 1, chloroplastic (138 aa).

The transit peptide at 1 to 56 (MASLSATTTVRVQPSSSSLHKLSQGNGRCSSIVCLDWGKSSFPTLRTSRRRSFISA) directs the protein to the chloroplast. The Carrier domain maps to 59–134 (KETIDKVCDI…QAADVIESLL (76 aa)). Residue serine 94 is modified to O-(pantetheine 4'-phosphoryl)serine.

This sequence belongs to the acyl carrier protein (ACP) family. 4'-phosphopantetheine is transferred from CoA to a specific serine of apo-ACP by acpS. This modification is essential for activity because fatty acids are bound in thioester linkage to the sulfhydryl of the prosthetic group.

Its subcellular location is the plastid. The protein resides in the chloroplast. Its pathway is lipid metabolism; fatty acid biosynthesis. In terms of biological role, carrier of the growing fatty acid chain in fatty acid biosynthesis. This chain is Acyl carrier protein 1, chloroplastic (ACL1.1), found in Spinacia oleracea (Spinach).